A 233-amino-acid chain; its full sequence is UPF0502 protein YPTS_2082 (233 aa).

It belongs to the UPF0502 family.

This Yersinia pseudotuberculosis serotype IB (strain PB1/+) protein is UPF0502 protein YPTS_2082.